A 200-amino-acid chain; its full sequence is Protein GrpE (200 aa).

Positions 1 to 10 are enriched in basic and acidic residues; it reads MQEKDSKDVT. Residues 1–57 form a disordered region; that stretch reads MQEKDSKDVTMEDEETIASQEEIEVEGNSEESSKEEESNNSEISDENLSEENLKLKD. The segment covering 11–29 has biased composition (acidic residues); that stretch reads MEDEETIASQEEIEVEGNS.

The protein belongs to the GrpE family. As to quaternary structure, homodimer.

The protein resides in the cytoplasm. Functionally, participates actively in the response to hyperosmotic and heat shock by preventing the aggregation of stress-denatured proteins, in association with DnaK and GrpE. It is the nucleotide exchange factor for DnaK and may function as a thermosensor. Unfolded proteins bind initially to DnaJ; upon interaction with the DnaJ-bound protein, DnaK hydrolyzes its bound ATP, resulting in the formation of a stable complex. GrpE releases ADP from DnaK; ATP binding to DnaK triggers the release of the substrate protein, thus completing the reaction cycle. Several rounds of ATP-dependent interactions between DnaJ, DnaK and GrpE are required for fully efficient folding. The polypeptide is Protein GrpE (Clostridium acetobutylicum (strain ATCC 824 / DSM 792 / JCM 1419 / IAM 19013 / LMG 5710 / NBRC 13948 / NRRL B-527 / VKM B-1787 / 2291 / W)).